We begin with the raw amino-acid sequence, 118 residues long: Large ribosomal subunit protein bL20 (118 aa).

This sequence belongs to the bacterial ribosomal protein bL20 family.

Functionally, binds directly to 23S ribosomal RNA and is necessary for the in vitro assembly process of the 50S ribosomal subunit. It is not involved in the protein synthesizing functions of that subunit. This chain is Large ribosomal subunit protein bL20, found in Cupriavidus metallidurans (strain ATCC 43123 / DSM 2839 / NBRC 102507 / CH34) (Ralstonia metallidurans).